The primary structure comprises 601 residues: MVNFSRKRPAVSSLFSQQQAIEQSLNWQALQPDLVIQDFPLEPVNFWALQPNATQGIDLFLRHPTRSLLMMKVGEPVEYAELLQNFISQNHHKVRSIFGVNYVIEQGDSFSFPHVYTEPAKSLDDNFASQGEALSALYCDQFQLFGSFRIHPRSQDIQLVPGLVHKANGGVLILSAATLLSQFDLWGRLKQILQTQTFDWYSAHPFKNLPCDIPSYALNLKVIVLGNRTELATLAELEENLYSFADYAEIESYISVAEVEEQKTWAGYVQQMAQEQNIELDFLALNKLYQLLVRESENRFLINASPLKLKEILQDASTFTEKTALSAVDFEGIFQQKLAQYGFLKEQTYADILNEQVYVETQGEIVGQINGLSVIEYPGTPVCFGEPSRISCIVQFGDGEVIDVERKNELAGNIHGKGMMIAQACLSNILDLPSQLPFSASLVFEQSYGEIDGDSASLAIFCVLVSALADLPLPQHIAITGSIDQFGLVHSVGGVNDKIEGFFTICQRRGLTGKQGVIIPMTTIQQLSLSDDVKSAVKNGEFFIYPVEDIYQACELLFGRDLLDENKDYTEKTESLSRLIQRRIEGRADSERKSFWHFFRS.

One can recognise a Lon proteolytic domain in the interval 363–560; it reads GEIVGQINGL…YQACELLFGR (198 aa). Active-site residues include S455 and K498.

Belongs to the peptidase S16 family.

In Haemophilus influenzae (strain ATCC 51907 / DSM 11121 / KW20 / Rd), this protein is Putative Lon protease homolog.